We begin with the raw amino-acid sequence, 678 residues long: NADPH--cytochrome P450 reductase (678 aa).

An N-acetylglycine modification is found at G2. At 2-22 (GDSHEDTSATVPEAVAEEVSL) the chain is on the lumenal side. A helical transmembrane segment spans residues 23–43 (FSTTDIVLFSLIVGVLTYWFI). Topologically, residues 44–678 (FKKKKEEIPE…KGRYSLDVWS (635 aa)) are cytoplasmic. The 145-residue stretch at 80–224 (IIVFYGSQTG…DFITWREQFW (145 aa)) folds into the Flavodoxin-like domain. Residues 86–91 (SQTGTA), 138–141 (ATYG), 173–182 (LGNKTYEHFN), and D208 each bind FMN. The FAD-binding FR-type domain maps to 279-521 (KNPFLAAVTT…FVRKSQFRLP (243 aa)). NADP(+) is bound at residue R298. FAD-binding positions include R424, 454-457 (RYYS), 472-474 (CAV), Y478, and 488-491 (GVAT). NADP(+) is bound by residues T535, 596–597 (SR), 602–606 (KVYVQ), and D639. W677 contributes to the FAD binding site.

This sequence belongs to the NADPH--cytochrome P450 reductase family. In the N-terminal section; belongs to the flavodoxin family. The protein in the C-terminal section; belongs to the flavoprotein pyridine nucleotide cytochrome reductase family. The cofactor is FAD. Requires FMN as cofactor.

It is found in the endoplasmic reticulum membrane. The catalysed reaction is 2 oxidized [cytochrome P450] + NADPH = 2 reduced [cytochrome P450] + NADP(+) + H(+). Its function is as follows. This enzyme is required for electron transfer from NADP to cytochrome P450 in microsomes. It can also provide electron transfer to heme oxygenase and cytochrome B5. The polypeptide is NADPH--cytochrome P450 reductase (Mus musculus (Mouse)).